The chain runs to 1705 residues: Clathrin heavy chain 1 (1705 aa).

N-acetylalanine is present on Ala2. Residues 2 to 492 (AAANAPIIMK…VDNDLALKIY (491 aa)) form a globular terminal domain region. WD40-like repeat stretches follow at residues 25–67 (FITF…RPIT), 68–113 (ADSA…MPEQ), 114–155 (VAFW…ANLA), 156–205 (NNQI…QALE), 206–270 (AHAA…PDFA), 271–314 (DDFP…ISPD), and 315–343 (PIFLTSEASSVGGFYAINRRGQVLLATVN). The tract at residues 462-478 (ENWLAEDKLECSEELGD) is binding site for the uncoating ATPase, involved in lattice disassembly. Residues 493 to 536 (IKARATPKVVAAFAERREFDKILIYSKQVGYTPDYMFLLQTILR) form a flexible linker region. Positions 537–648 (TDPQGAVNFA…QSLKHYSELP (112 aa)) are distal segment. The interval 537-1705 (TDPQGAVNFA…PYGMPPMGGY (1169 aa)) is heavy chain arm. CHCR repeat units lie at residues 551–697 (QMEG…QIIV), 700–842 (CKEY…PEDF), 847–986 (ILSV…QLID), 993–1138 (LPES…VSDA), 1142–1283 (FIRA…FRLA), 1288–1434 (LNII…DIIN), and 1437–1580 (LNVL…KECF). Residues 653–1705 (VIVNTHAIEP…PYGMPPMGGY (1053 aa)) form a proximal segment region. An involved in binding clathrin light chain region spans residues 1227–1536 (AAKIIYAFIS…YIYKKAGRWK (310 aa)). The trimerization stretch occupies residues 1564-1705 (AEQLLVYFIE…PYGMPPMGGY (142 aa)).

It belongs to the clathrin heavy chain family. Clathrin triskelions, composed of 3 heavy chains and 3 light chains, are the basic subunits of the clathrin coat. Interacts with SCYL2B.

The protein resides in the cytoplasmic vesicle membrane. It is found in the membrane. It localises to the coated pit. In terms of biological role, clathrin is the major protein of the polyhedral coat of coated pits and vesicles. Mediates endocytosis and is required for a correct polar distribution of PIN auxin transporters. This Arabidopsis thaliana (Mouse-ear cress) protein is Clathrin heavy chain 1.